An 819-amino-acid chain; its full sequence is Solute carrier organic anion transporter family member 74D (819 aa).

Positions 1–157 (MTKSNGDVEA…GSSAESSSSC (157 aa)) are disordered. Residues 1-174 (MTKSNGDVEA…RWARRFASTH (174 aa)) are Cytoplasmic-facing. 3 stretches are compositionally biased toward polar residues: residues 24–34 (GHGQLNGNGYH), 43–62 (SQAFTPLLSQHNNGTTNGEV), and 71–81 (LYESTPSNNNE). Composition is skewed to low complexity over residues 91–111 (LKNGLGNILSSNNNGTGNGHS) and 144–157 (DLNGGSSAESSSSC). The helical transmembrane segment at 175–195 (VFMVVFLLAYILQGMYMTYFV) threads the bilayer. At 196 to 213 (SVITTIEKLFQIKSKTTG) the chain is on the extracellular side. The chain crosses the membrane as a helical span at residues 214 to 234 (ILLSASEMGQICTAMLLTYFA). Topologically, residues 235-242 (GRGHRPRW) are cytoplasmic. A helical membrane pass occupies residues 243 to 263 (IACGMVLFSIAAFSCALPHFI). Topologically, residues 264–332 (FGEQLMHSSV…LEQASHSKIT (69 aa)) are extracellular. Asn284, Asn293, and Asn309 each carry an N-linked (GlcNAc...) asparagine glycan. Residues 333–353 (VIVLCIFFGSLLSSGIGQTAV) form a helical membrane-spanning segment. Over 354–373 (ATLGIPYIDDNVGSKQSPMY) the chain is Cytoplasmic. The helical transmembrane segment at 374–394 (MAVTIGMRILGPASGFIFGSF) threads the bilayer. The Extracellular segment spans residues 395–413 (CTRWYVNFSNPGFDATDPR). An N-linked (GlcNAc...) asparagine glycan is attached at Asn401. The chain crosses the membrane as a helical span at residues 414–434 (WIGAWWLGPVAIGSLMLLASI). At 435–488 (AMFSFPKQLRGKQKPPGQTATPAAPVEPEEKPKLKDFPKTVRRQLSNDILMFRT) the chain is on the cytoplasmic side. The tract at residues 444 to 466 (RGKQKPPGQTATPAAPVEPEEKP) is disordered. Residues 489–509 (ASCVFHLLPIAGLYTFLPKYL) traverse the membrane as a helical segment. The Extracellular portion of the chain corresponds to 510–522 (ETQFRLATYDANM). The chain crosses the membrane as a helical span at residues 523-543 (IAAFCGILVMGIGIVISGLFI). At 544-553 (LKRKPTARGV) the chain is on the cytoplasmic side. Residues 554 to 574 (AAWIAFTALVYSAGMIILMFI) form a helical membrane-spanning segment. At 575-667 (GCSMNDFAGY…NGYCDNNCKN (93 aa)) the chain is on the extracellular side. Residues 593 to 651 (ALIEPTCSAALNCTCDKENFAPICADGKMYISACHAGCSSSSLRPSDNRTLYSDCACIP) form the Kazal-like domain. Cystine bridges form between Cys599–Cys630, Cys607–Cys626, and Cys616–Cys649. The N-linked (GlcNAc...) asparagine glycan is linked to Asn604. A glycan (N-linked (GlcNAc...) asparagine) is linked at Asn640. The chain crosses the membrane as a helical span at residues 668-688 (FIYFILIFAICVFMHSTSEVG). Topologically, residues 689 to 707 (SMLLVMRCTHPKDKAMAMG) are cytoplasmic. The chain crosses the membrane as a helical span at residues 708–728 (VIQSAIGLFGNVPCPIIYGAV). Residues 729–756 (VDSACLIWKSVCGKHGACSLYDADTFRQ) lie on the Extracellular side of the membrane. Residues 757 to 777 (YFLGITAGIMFLAFLMDLVVW) form a helical membrane-spanning segment. The Cytoplasmic segment spans residues 778–819 (RKAHRIDIAPEDPQEGGPASNGRTLEVSESKQPITPAPDTTV). The interval 787–819 (PEDPQEGGPASNGRTLEVSESKQPITPAPDTTV) is disordered. A compositionally biased stretch (polar residues) spans 807-819 (SKQPITPAPDTTV).

Belongs to the organo anion transporter (TC 2.A.60) family.

It localises to the cell membrane. Functionally, transporter that mediates the cellular uptake of ecdysteroids, including ecdysone, from the hemolymph. The polypeptide is Solute carrier organic anion transporter family member 74D (Drosophila melanogaster (Fruit fly)).